The following is a 196-amino-acid chain: Small ribosomal subunit protein uS4c (196 aa).

The S4 RNA-binding domain maps to 89-157; sequence MRLDNILFRL…VQNYIASSDP (69 aa).

Belongs to the universal ribosomal protein uS4 family. Part of the 30S ribosomal subunit. Contacts protein S5. The interaction surface between S4 and S5 is involved in control of translational fidelity.

It localises to the plastid. Its subcellular location is the chloroplast. One of the primary rRNA binding proteins, it binds directly to 16S rRNA where it nucleates assembly of the body of the 30S subunit. Its function is as follows. With S5 and S12 plays an important role in translational accuracy. The protein is Small ribosomal subunit protein uS4c (rps4) of Elymus canadensis (Canada wild rye).